The sequence spans 142 residues: MAKKITGFVKLQVPAGAANPSPPIGPALGQRGLNIMEFCKAFNARTAQMEKGTPIPVVITAYGDRSFTFEMKLPPVSYFLKKASGIASGSKTAGRGFAGKISKAQIREIAEKKMPDLNCASVDAAMTMIEGSARSMGLEITG.

Belongs to the universal ribosomal protein uL11 family. In terms of assembly, part of the ribosomal stalk of the 50S ribosomal subunit. Interacts with L10 and the large rRNA to form the base of the stalk. L10 forms an elongated spine to which L12 dimers bind in a sequential fashion forming a multimeric L10(L12)X complex. One or more lysine residues are methylated.

In terms of biological role, forms part of the ribosomal stalk which helps the ribosome interact with GTP-bound translation factors. The protein is Large ribosomal subunit protein uL11 of Methylocella silvestris (strain DSM 15510 / CIP 108128 / LMG 27833 / NCIMB 13906 / BL2).